A 488-amino-acid chain; its full sequence is Protein nucleotidyltransferase YdiU (488 aa).

The ATP site is built by Gly91, Gly93, Arg94, Lys114, Asp126, Gly127, Arg177, and Arg184. The Proton acceptor role is filled by Asp253. Asn254 and Asp263 together coordinate Mg(2+). Asp263 is an ATP binding site.

The protein belongs to the SELO family. The cofactor is Mg(2+). Mn(2+) serves as cofactor.

The enzyme catalyses L-seryl-[protein] + ATP = 3-O-(5'-adenylyl)-L-seryl-[protein] + diphosphate. It carries out the reaction L-threonyl-[protein] + ATP = 3-O-(5'-adenylyl)-L-threonyl-[protein] + diphosphate. The catalysed reaction is L-tyrosyl-[protein] + ATP = O-(5'-adenylyl)-L-tyrosyl-[protein] + diphosphate. It catalyses the reaction L-histidyl-[protein] + UTP = N(tele)-(5'-uridylyl)-L-histidyl-[protein] + diphosphate. The enzyme catalyses L-seryl-[protein] + UTP = O-(5'-uridylyl)-L-seryl-[protein] + diphosphate. It carries out the reaction L-tyrosyl-[protein] + UTP = O-(5'-uridylyl)-L-tyrosyl-[protein] + diphosphate. In terms of biological role, nucleotidyltransferase involved in the post-translational modification of proteins. It can catalyze the addition of adenosine monophosphate (AMP) or uridine monophosphate (UMP) to a protein, resulting in modifications known as AMPylation and UMPylation. The protein is Protein nucleotidyltransferase YdiU of Bacillus cereus (strain B4264).